The primary structure comprises 530 residues: Glucose-6-phosphate isomerase (530 aa).

Residue Glu335 is the Proton donor of the active site. Catalysis depends on residues His366 and Lys495.

Belongs to the GPI family.

Its subcellular location is the cytoplasm. The enzyme catalyses alpha-D-glucose 6-phosphate = beta-D-fructose 6-phosphate. It functions in the pathway carbohydrate biosynthesis; gluconeogenesis. It participates in carbohydrate degradation; glycolysis; D-glyceraldehyde 3-phosphate and glycerone phosphate from D-glucose: step 2/4. Functionally, catalyzes the reversible isomerization of glucose-6-phosphate to fructose-6-phosphate. The chain is Glucose-6-phosphate isomerase from Roseobacter denitrificans (strain ATCC 33942 / OCh 114) (Erythrobacter sp. (strain OCh 114)).